The chain runs to 521 residues: MRPSLLQYLKLLLLLALGGVTTMHVPKQDVPSSLEELTLDGHFSFHDVSAAAQDFGNLSSFPPVAVLHPGSVADIATTIRHVFLMGEHSTLTVAARGHGHSLYGQSQAAEGIIISMESLQSNTMRVNPGVSPYVDASGGELWINVLHETLKYGLAPKSWTDYLHLTVGGTLSNAGVSGQTFRHGPQISNVNELEIVTGRGDVITCSPEQNSDLFHAALGGLGQFGVITRARIPLEPAPKMVRWLRVLYLDFTSFTEDQEMLISAEKTFDYIEGFVIINRTGILNNWRSSFNPQDPVRSSQFESDGKVLFCLEMTKNFNPDEADVMEQEVNTLLSQLRYMPSSLFHTDVTYIEFLDRVHSSEMKLRAKGMWEVPHPWLNIIIPRSMIHKFAKEVFGKILKDSNNGPILLYPVNKSRWDNRTSVVIPDEEVFYLVAFLSSALGPHNIKHTLDLNYRIIEFSDKAGIGVKQYLPNYTTEQEWQSHFGARWDTFQQRKKAYDPLAILAPGQRIFQKASASLPLPS.

The N-terminal stretch at 1-22 is a signal peptide; it reads MRPSLLQYLKLLLLLALGGVTT. The N-linked (GlcNAc...) asparagine glycan is linked to Asn57. In terms of domain architecture, FAD-binding PCMH-type spans 59–237; that stretch reads SSFPPVAVLH…TRARIPLEPA (179 aa). Residues Ala95, Gly97, and Gly99 each contribute to the FAD site. His100 bears the Pros-8alpha-FAD histidine mark. Residues Ser101, Gln105, Asp161, Thr166, Ser172, Val176, and Ile227 each coordinate FAD. Residues Asn278, Asn412, and Asn418 are each glycosylated (N-linked (GlcNAc...) asparagine). Tyr469 is an FAD binding site. Residue Asn472 is glycosylated (N-linked (GlcNAc...) asparagine). FAD is bound at residue Gln507.

The protein belongs to the oxygen-dependent FAD-linked oxidoreductase family. Monomer. FAD is required as a cofactor. Expressed in inflorescence meristems.

It is found in the secreted. The protein localises to the extracellular space. It localises to the cytoplasm. The protein resides in the cytosol. Its subcellular location is the nucleus. It carries out the reaction N(6)-dimethylallyladenine + A + H2O = 3-methyl-2-butenal + adenine + AH2. Functionally, catalyzes the oxidation of cytokinins, a family of N(6)-substituted adenine derivatives that are plant hormones, where the substituent is an isopentenyl group. Possesses cytokinin oxidase activity toward trans-zeatin (tZ) and N6-(2-isopentenyl)adenine (2iP) in vitro. Functions as a primary strigolactone-responsive gene to regulate rice tillering, plant height, and panicle size, likely via a secondary response gene, RR5, which encodes a cytokinin-inducible rice type-A response regulator that seems to act as negative regulator of the cytokinin signaling. The sequence is that of Cytokinin dehydrogenase 9 from Oryza sativa subsp. japonica (Rice).